The following is a 297-amino-acid chain: Ribonuclease HIII (297 aa).

Positions isoleucine 81–lysine 297 constitute an RNase H type-2 domain. A divalent metal cation contacts are provided by aspartate 87, glutamate 88, and aspartate 192.

Belongs to the RNase HII family. RnhC subfamily. It depends on Mn(2+) as a cofactor. The cofactor is Mg(2+).

It is found in the cytoplasm. It catalyses the reaction Endonucleolytic cleavage to 5'-phosphomonoester.. Its function is as follows. Endonuclease that specifically degrades the RNA of RNA-DNA hybrids. The polypeptide is Ribonuclease HIII (Streptococcus agalactiae serotype III (strain NEM316)).